Here is a 286-residue protein sequence, read N- to C-terminus: 33 kDa chaperonin (286 aa).

2 disulfides stabilise this stretch: C225/C227 and C258/C261.

Belongs to the HSP33 family. In terms of processing, under oxidizing conditions two disulfide bonds are formed involving the reactive cysteines. Under reducing conditions zinc is bound to the reactive cysteines and the protein is inactive.

Its subcellular location is the cytoplasm. In terms of biological role, redox regulated molecular chaperone. Protects both thermally unfolding and oxidatively damaged proteins from irreversible aggregation. Plays an important role in the bacterial defense system toward oxidative stress. This chain is 33 kDa chaperonin, found in Shewanella loihica (strain ATCC BAA-1088 / PV-4).